The chain runs to 1407 residues: DNA-directed RNA polymerase subunit beta' (1407 aa).

Residues Cys-70, Cys-72, Cys-85, and Cys-88 each contribute to the Zn(2+) site. 3 residues coordinate Mg(2+): Asp-460, Asp-462, and Asp-464. Residues Cys-814, Cys-888, Cys-895, and Cys-898 each coordinate Zn(2+).

It belongs to the RNA polymerase beta' chain family. As to quaternary structure, the RNAP catalytic core consists of 2 alpha, 1 beta, 1 beta' and 1 omega subunit. When a sigma factor is associated with the core the holoenzyme is formed, which can initiate transcription. Mg(2+) is required as a cofactor. Zn(2+) serves as cofactor.

It catalyses the reaction RNA(n) + a ribonucleoside 5'-triphosphate = RNA(n+1) + diphosphate. DNA-dependent RNA polymerase catalyzes the transcription of DNA into RNA using the four ribonucleoside triphosphates as substrates. This Salmonella paratyphi A (strain ATCC 9150 / SARB42) protein is DNA-directed RNA polymerase subunit beta'.